Reading from the N-terminus, the 31-residue chain is Potassium channel toxin alpha-KTx 5.4 (31 aa).

3 cysteine pairs are disulfide-bonded: Cys-3–Cys-21, Cys-8–Cys-26, and Cys-12–Cys-28. Positions 6–9 are [R/K]XCQ motif; the sequence is RRCE. Tyr-31 carries the tyrosine amide modification.

Belongs to the short scorpion toxin superfamily. Potassium channel inhibitor family. Alpha-KTx 05 subfamily. As to expression, expressed by the venom gland.

The protein resides in the secreted. Its function is as follows. Blocks small conductance calcium-activated potassium channels. Shows activity on KCa2.2/KCNN2 (IC(50)=0.0243 nM), KCa2.3/KCNN3 (IC(50)=1.7 nM), and KCa2.1/KCNN1 (IC(50)=42 nM). Induces cell death when tested on human T lymphoblastic leukemia Jurkat E6.1 and human breast cancer MDA-MB-231 cell lines which constituvely express KCa2.2/KCNN2, but not on human peripheral blood lymphocytes (which do not express KCa2.2/KCNN2). The polypeptide is Potassium channel toxin alpha-KTx 5.4 (Hottentotta tamulus (Eastern Indian scorpion)).